A 144-amino-acid polypeptide reads, in one-letter code: Large ribosomal subunit protein uL13 (144 aa).

The protein belongs to the universal ribosomal protein uL13 family. In terms of assembly, part of the 50S ribosomal subunit.

This protein is one of the early assembly proteins of the 50S ribosomal subunit, although it is not seen to bind rRNA by itself. It is important during the early stages of 50S assembly. This is Large ribosomal subunit protein uL13 from Clostridium perfringens (strain 13 / Type A).